An 895-amino-acid chain; its full sequence is Clathrin interactor EPSIN 2 (895 aa).

Positions 18 to 150 (KKVLKVPGVE…NDKERIAEVR (133 aa)) constitute an ENTH domain. 3 stretches are compositionally biased toward basic and acidic residues: residues 150–161 (RQKAAANRDKYR), 177–236 (DKYD…RSRS), and 245–257 (RSSE…DGHS). A disordered region spans residues 150 to 396 (RQKAAANRDK…PTVTSMSAPT (247 aa)). 2 positions are modified to phosphoserine: serine 270 and serine 282. Residues 329 to 348 (AAPEAASPPTGTNTANTTAT) are compositionally biased toward low complexity. Polar residues-rich tracts occupy residues 349 to 358 (FVNESPSQKV) and 387 to 396 (PTVTSMSAPT). A Clathrin binding motif is present at residues 409–413 (LADVF). Disordered regions lie at residues 436-533 (AGPA…PQEQ) and 758-784 (KQTN…GRSG). Residues 440–454 (PSFSTSQPSTQSFDD) are compositionally biased toward low complexity. An ALPHA-ADR binding motif is present at residues 454–456 (DPF). 3 stretches are compositionally biased toward polar residues: residues 464 to 479 (FTST…NFGA), 515 to 533 (PASQ…PQEQ), and 759 to 769 (QTNTPATSTIN).

It belongs to the epsin family. In terms of assembly, interacts with clathrin, VTI12, DELTA-ADR and ALPHA-ADR.

It localises to the golgi apparatus. Its subcellular location is the cytoplasmic vesicle. The protein localises to the clathrin-coated vesicle. Functionally, may have a role in transport via clathrin-coated vesicles from the trans-Golgi network to endosomes. Stimulates clathrin assembly. Binds to membranes enriched in phosphatidylinositol 3-phosphate (PtdIns(3)P). Plays an important role in protein trafficking. The protein is Clathrin interactor EPSIN 2 (EPSIN2) of Arabidopsis thaliana (Mouse-ear cress).